Reading from the N-terminus, the 141-residue chain is Large ribosomal subunit protein uL11 (141 aa).

It belongs to the universal ribosomal protein uL11 family. In terms of assembly, part of the ribosomal stalk of the 50S ribosomal subunit. Interacts with L10 and the large rRNA to form the base of the stalk. L10 forms an elongated spine to which L12 dimers bind in a sequential fashion forming a multimeric L10(L12)X complex. One or more lysine residues are methylated.

In terms of biological role, forms part of the ribosomal stalk which helps the ribosome interact with GTP-bound translation factors. The polypeptide is Large ribosomal subunit protein uL11 (Acetivibrio thermocellus (strain ATCC 27405 / DSM 1237 / JCM 9322 / NBRC 103400 / NCIMB 10682 / NRRL B-4536 / VPI 7372) (Clostridium thermocellum)).